A 206-amino-acid chain; its full sequence is Thymidylate kinase (206 aa).

An ATP-binding site is contributed by 10–17 (GIDGAGKS).

This sequence belongs to the thymidylate kinase family.

The enzyme catalyses dTMP + ATP = dTDP + ADP. In terms of biological role, phosphorylation of dTMP to form dTDP in both de novo and salvage pathways of dTTP synthesis. This chain is Thymidylate kinase, found in Neisseria meningitidis serogroup C / serotype 2a (strain ATCC 700532 / DSM 15464 / FAM18).